The sequence spans 911 residues: Eukaryotic translation initiation factor 3 subunit C (911 aa).

Residues M1–D44 form a disordered region. Positions G8–E21 are enriched in low complexity. 7 positions are modified to phosphoserine: S9, S11, S13, S15, S16, S18, and S39. Position 99 is an N6-acetyllysine (K99). Disordered stretches follow at residues T157–W299 and Q520–E540. A phosphoserine mark is found at S166, S178, S181, and S182. A compositionally biased stretch (acidic residues) spans S166–G190. The segment covering K199–R208 has biased composition (basic and acidic residues). Residues D216 to D230 show a composition bias toward acidic residues. Residues P259–A276 show a composition bias toward basic and acidic residues. The span at Q520–K529 shows a compositional bias: polar residues. Phosphothreonine is present on T522. The residue at position 641 (K641) is an N6-acetyllysine. The 177-residue stretch at F671–P847 folds into the PCI domain. The interval F883–Y911 is disordered. The span at R884–M897 shows a compositional bias: basic and acidic residues. S907 carries the phosphoserine modification.

This sequence belongs to the eIF-3 subunit C family. As to quaternary structure, component of the eukaryotic translation initiation factor 3 (eIF-3) complex, which is composed of 13 subunits: EIF3A, EIF3B, EIF3C, EIF3D, EIF3E, EIF3F, EIF3G, EIF3H, EIF3I, EIF3J, EIF3K, EIF3L and EIF3M. The eIF-3 complex appears to include 3 stable modules: module A is composed of EIF3A, EIF3B, EIF3G and EIF3I; module B is composed of EIF3F, EIF3H, and EIF3M; and module C is composed of EIF3C, EIF3D, EIF3E, EIF3K and EIF3L. EIF3C of module C binds EIF3B of module A and EIF3H of module B, thereby linking the three modules. EIF3J is a labile subunit that binds to the eIF-3 complex via EIF3B. The eIF-3 complex may interact with RPS6KB1 under conditions of nutrient depletion. Mitogenic stimulation may lead to binding and activation of a complex composed of MTOR and RPTOR, leading to phosphorylation and release of RPS6KB1 and binding of EIF4B to eIF-3. Interacts with ALKBH4, IFIT1 and IFIT2. Interacts with BZW2/5MP1. In terms of processing, phosphorylated. Phosphorylation is enhanced upon serum stimulation.

It localises to the cytoplasm. Functionally, component of the eukaryotic translation initiation factor 3 (eIF-3) complex, which is required for several steps in the initiation of protein synthesis. The eIF-3 complex associates with the 40S ribosome and facilitates the recruitment of eIF-1, eIF-1A, eIF-2:GTP:methionyl-tRNAi and eIF-5 to form the 43S pre-initiation complex (43S PIC). The eIF-3 complex stimulates mRNA recruitment to the 43S PIC and scanning of the mRNA for AUG recognition. The eIF-3 complex is also required for disassembly and recycling of post-termination ribosomal complexes and subsequently prevents premature joining of the 40S and 60S ribosomal subunits prior to initiation. The eIF-3 complex specifically targets and initiates translation of a subset of mRNAs involved in cell proliferation, including cell cycling, differentiation and apoptosis, and uses different modes of RNA stem-loop binding to exert either translational activation or repression. This is Eukaryotic translation initiation factor 3 subunit C (Eif3c) from Mus musculus (Mouse).